Consider the following 309-residue polypeptide: Protein FdhE (309 aa).

This sequence belongs to the FdhE family.

It is found in the cytoplasm. Its function is as follows. Necessary for formate dehydrogenase activity. This Escherichia coli O139:H28 (strain E24377A / ETEC) protein is Protein FdhE.